Consider the following 501-residue polypeptide: Cytochrome P450 81F4 (501 aa).

Lys245 is covalently cross-linked (Glycyl lysine isopeptide (Lys-Gly) (interchain with G-Cter in ubiquitin)). Residues 285-305 (IIIKGLMLGIMVASSETSALT) form a helical membrane-spanning segment. Cys435 contacts heme.

The protein belongs to the cytochrome P450 family. The cofactor is heme.

The protein localises to the membrane. It functions in the pathway secondary metabolite biosynthesis. Functionally, involved in indole glucosinolate biosynthesis. Catalyzes hydroxylation reactions of the glucosinolate indole ring. Converts indol-3-yl-methylglucosinolate (I3M) to 1-hydroxy-indol-3-yl-methylglucosinolate (1OH-I3M) intermediate. This hydroxy intermediates is converted to 1-methoxy-indol-3-yl-methylglucosinolate (1MO-I3M) by indole glucosinolate methyltransferase 1 and 2 (IGMT1 and IGMT2). This Arabidopsis thaliana (Mouse-ear cress) protein is Cytochrome P450 81F4.